Reading from the N-terminus, the 260-residue chain is Thiazole synthase (260 aa).

Lys-100 functions as the Schiff-base intermediate with DXP in the catalytic mechanism. 1-deoxy-D-xylulose 5-phosphate is bound by residues Gly-161, 187–188, and 209–210; these read AG and NT.

This sequence belongs to the ThiG family. In terms of assembly, homotetramer. Forms heterodimers with either ThiH or ThiS.

The protein localises to the cytoplasm. The catalysed reaction is [ThiS sulfur-carrier protein]-C-terminal-Gly-aminoethanethioate + 2-iminoacetate + 1-deoxy-D-xylulose 5-phosphate = [ThiS sulfur-carrier protein]-C-terminal Gly-Gly + 2-[(2R,5Z)-2-carboxy-4-methylthiazol-5(2H)-ylidene]ethyl phosphate + 2 H2O + H(+). It participates in cofactor biosynthesis; thiamine diphosphate biosynthesis. Its function is as follows. Catalyzes the rearrangement of 1-deoxy-D-xylulose 5-phosphate (DXP) to produce the thiazole phosphate moiety of thiamine. Sulfur is provided by the thiocarboxylate moiety of the carrier protein ThiS. In vitro, sulfur can be provided by H(2)S. The sequence is that of Thiazole synthase from Sorangium cellulosum (strain So ce56) (Polyangium cellulosum (strain So ce56)).